Reading from the N-terminus, the 600-residue chain is NADH-ubiquinone oxidoreductase chain 5 (600 aa).

16 consecutive transmembrane segments (helical) span residues 1 to 21, 27 to 47, 81 to 101, 110 to 130, 136 to 156, 178 to 198, 200 to 220, 241 to 261, 274 to 294, 301 to 323, 327 to 347, 366 to 386, 404 to 424, 450 to 470, 488 to 508, and 520 to 540; these read MYIL…LFGR, GAGI…LLIF, LTAV…IFST, VPRF…LVTS, LFIG…FWLT, FVLA…ASVF, IVAL…FIGA, TPVS…FLLI, LMVV…IGLV, VIAY…SQYS, FHLM…GSVI, IPFT…FPYL, YLAF…AYSL, WNLT…GYLT, SIKL…VVLY, and SPVG…NYII.

The protein belongs to the complex I subunit 5 family.

It localises to the mitochondrion inner membrane. The enzyme catalyses a ubiquinone + NADH + 5 H(+)(in) = a ubiquinol + NAD(+) + 4 H(+)(out). Its function is as follows. Core subunit of the mitochondrial membrane respiratory chain NADH dehydrogenase (Complex I) that is believed to belong to the minimal assembly required for catalysis. Complex I functions in the transfer of electrons from NADH to the respiratory chain. The immediate electron acceptor for the enzyme is believed to be ubiquinone. The sequence is that of NADH-ubiquinone oxidoreductase chain 5 (ND5) from Metridium senile (Brown sea anemone).